Here is a 265-residue protein sequence, read N- to C-terminus: MFPRTYAVLGSTGNCGTALIENLLKTPDARIHAYCRNRPKLLQILPQLEESDRVTIFEGNIQDAELLQSCLRNCHAVFLVVSTNDNIPGCHLAQDTATAVIQALQDLKRNNPTSTVMPKLVLLSSATTDSQLSRDVPSLLRFILHRSASYVYEDLVVTEKLLHAQKDWLTSIFIKPGALSVDIQRGHALSQTDQDGPLSYLDLAAAMIEAADEETGCYDMQSLGVVNTNGKAKFPTGTPLCILVGLLRHYFPFLHPYLPMNTGPR.

This sequence belongs to the avfA family.

Its pathway is secondary metabolite biosynthesis. Its function is as follows. Oxidoreductase; part of the gene cluster that mediates the biosynthesis of the tetrahydroxanthone dimer neosartorin, which exhibits antibacterial activity. The two different monomeric units appear to be synthesized by the same set of enzymes, among which the Baeyer-Villiger monooxygenase nsrF is the key enzyme for the divergence of the biosynthetic routes. The pathway begins with the synthesis of atrochrysone thioester by the polyketide synthase nsrB. The atrochrysone carboxyl ACP thioesterase nsrC then breaks the thioester bond and releases the atrochrysone carboxylic acid from AacuL. Atrochrysone carboxylic acid is decarboxylated by the decarboxylase nsrE, and oxidized by the anthrone oxygenase nsrD to yield emodin. Emodin is then reduced to emodin hydroquinone by the oxidoreductase nsrR. A-ring reduction by the short chain dehydrogenase nsrJ, dehydration by the scytalone dehydratase-like protein nsrI and probable spontaneous re-oxidation, results in overall deoxygenation to chrysophanol. The Baeyer-Villiger monooxygenase nsrF accepts chrysophanol as a substrate to insert one oxygen atom at two different positions to yield the precursors of both monomric units. NsrF is promiscuous/flexible in interacting with the 2 (non methylated and methylated) aromatic rings of chrysophanol, thus diverging the biosynthetic pathway at this point. After the hydrolysis of the lactones, methylesterification by the methyltransferase nsrG yields respectively moniliphenone and 2,2',6'-trihydroxy-4-methyl-6-methoxya-cyldiphenylmethanone. The next steps are the hydroxylation by the FAD-dependent monooxygenase nsrK, followed by isomerization by the monooxygenase nsrQ. The short chain dehydrogenase/reductase nsrO then catalyzes the C-5 ketoreduction to give the xanthone skeleton of blennolide C and 5-acetylblennolide A. The acetyltransferase nsrL has a strict substrate specificity and uses only blennolide A but not blennolide C to yield 5-acetylblennolide A as the single-acetylated product. In the final step of the biosynthesis, the heterodimerization of the 2 xanthones, blennolide C and 5-acetylblennolide A, is catalyzed by the cytochrome P450 monooxygenase nsrP. NsrP can utilize at least three different xanthones as its substrates to perform the dimerization reaction. This Aspergillus novofumigatus (strain IBT 16806) protein is Oxidoreductase nsrR.